A 576-amino-acid polypeptide reads, in one-letter code: Beta-bisabolene synthase (576 aa).

Positions 286, 323, 327, 466, and 469 each coordinate (2E,6E)-farnesyl diphosphate. Asp323 and Asp327 together coordinate Mg(2+). The short motif at 323–327 (DDVYD) is the DDXXD motif element. Positions 469, 473, and 477 each coordinate Mg(2+).

This sequence belongs to the terpene synthase family. Tpsb subfamily. Mg(2+) serves as cofactor. Requires Mn(2+) as cofactor.

Functionally, produces almost exclusively beta-bisabolene and only traces of alpha-bisabolol from (2E,6E)-farnesyl diphosphate in fragrance biosynthesis. This Santalum austrocaledonicum (Sandalwood) protein is Beta-bisabolene synthase.